The sequence spans 178 residues: Large ribosomal subunit protein uL5 (178 aa).

This sequence belongs to the universal ribosomal protein uL5 family. In terms of assembly, part of the 50S ribosomal subunit; part of the 5S rRNA/L5/L18/L25 subcomplex. Contacts the 5S rRNA and the P site tRNA. Forms a bridge to the 30S subunit in the 70S ribosome.

Its function is as follows. This is one of the proteins that bind and probably mediate the attachment of the 5S RNA into the large ribosomal subunit, where it forms part of the central protuberance. In the 70S ribosome it contacts protein S13 of the 30S subunit (bridge B1b), connecting the 2 subunits; this bridge is implicated in subunit movement. Contacts the P site tRNA; the 5S rRNA and some of its associated proteins might help stabilize positioning of ribosome-bound tRNAs. This is Large ribosomal subunit protein uL5 from Acinetobacter baumannii (strain AB0057).